The chain runs to 252 residues: MAKNAMLCLLILRVVLALAFATNKKGDEEPENHSTGIFGKVGRVVTVALAMSSRLGGADATRGGGAVYGRDLKSNQLPNNNWMAPPPPMAIRSAKVYDSKHSPAEYLKKFAQDFRRKTGMHSQRHHEETTLEQEKRVAGAGPDPIHHQDTTLEQEKRAVPAGPDPKHHEETTLEQEKRAVPAGPDPKHHEETTLEQEKRAVPAGPDPKHHEETTLEQEKRAVPAGPDPKHHEETTFEQEKRGAPAGPDPIHH.

The first 21 residues, 1 to 21 (MAKNAMLCLLILRVVLALAFA), serve as a signal peptide directing secretion. The tract at residues 21-83 (ATNKKGDEEP…SNQLPNNNWM (63 aa)) is required for secretion from the host cytoplasm to the host apoplasm. Residue N32 is glycosylated (N-linked (GlcNAc...) asparagine). The segment at 116–252 (RKTGMHSQRH…APAGPDPIHH (137 aa)) is disordered. Basic and acidic residues-rich tracts occupy residues 125-137 (HHEE…EKRV) and 144-242 (PIHH…EKRG). One copy of the A-1 repeat lies at 127-135 (EETTLEQEK). Residues 127–219 (EETTLEQEKR…HEETTLEQEK (93 aa)) form a 6 X approximate repeat A region. The CLE-1 repeat unit spans residues 136-147 (RVAGAGPDPIHH). Residues 136-252 (RVAGAGPDPI…APAGPDPIHH (117 aa)) form a 6 X approximate repeat CLE region. Residues 148–156 (QDTTLEQEK) form an A-2 repeat. One copy of the CLE-2 repeat lies at 157-168 (RAVPAGPDPKHH). Residues 169–177 (EETTLEQEK) form an A-3 repeat. One copy of the CLE-3 repeat lies at 178-189 (RAVPAGPDPKHH). One copy of the A-4 repeat lies at 190–198 (EETTLEQEK). One copy of the CLE-4 repeat lies at 199–210 (RAVPAGPDPKHH). Residues 211–219 (EETTLEQEK) form an A-5 repeat. One copy of the CLE-5 repeat lies at 220 to 231 (RAVPAGPDPKHH). An A-6 repeat occupies 232 to 240 (EETTFEQEK). A CLE-6 repeat occupies 241–252 (RGAPAGPDPIHH).

Belongs to the CLV3/ESR signal peptide family. In terms of tissue distribution, highly expressed exclusively within the dorsal esophageal gland cell during syncytium formation in host plants.

It localises to the secreted. Its subcellular location is the host cytoplasm. The protein localises to the host extracellular space. The protein resides in the extracellular space. It is found in the apoplast. In terms of biological role, mimics host plant CLE extracellular signal peptides that regulate cell fate. May play a role in the differentiation or division of feeding cells (syncytia) induced in plant roots during infection. In Globodera rostochiensis (Golden nematode worm), this protein is CLAVATA3/ESR (CLE)-related protein 4A-1 (CLE-4A-1).